A 1427-amino-acid polypeptide reads, in one-letter code: Lysophospholipase NTE1 (1427 aa).

The Cytoplasmic portion of the chain corresponds to 1-60 (MDSLHVSSTSVLVDVVEAVETATSLVVDTAEAVATEQATPTAVISNALARSAYAAHTSLS). A helical membrane pass occupies residues 61–81 (YLAWAFGLWFLRLIGWVCYGI). At 82-96 (PTYVLGLLGRTINIS) the chain is on the lumenal side. Residues 97–117 (LQFSSLLLILIALVTVVVAVV) form a helical membrane-spanning segment. Topologically, residues 118-1427 (RYKYLTVYSR…KRTIARRNSI (1310 aa)) are cytoplasmic. Polar residues predominate over residues 281 to 296 (PMTSASDVPNMSLSSD). The segment at 281 to 315 (PMTSASDVPNMSLSSDGSDDLQKGEPQFGEPRLSE) is disordered. Residues 615-735 (LMAA…LTKV) and 731-870 (SLTK…VASR) contribute to the a nucleoside 3',5'-cyclic phosphate site. The interval 787-807 (GIVGGESGDAKDGKSHRKNLT) is disordered. The 165-residue stretch at 1124–1288 (LVLGGGGARG…VDNLPVSEMK (165 aa)) folds into the PNPLA domain. The GXGXXG signature appears at 1128-1133 (GGGARG). The GXSXG motif lies at 1155 to 1159 (GTSIG). Residue S1157 is the Nucleophile of the active site. D1275 functions as the Proton acceptor in the catalytic mechanism. Residues 1275–1277 (DGG) carry the DGA/G motif.

The protein belongs to the NTE family.

It localises to the endoplasmic reticulum membrane. The catalysed reaction is a 1-acyl-sn-glycero-3-phosphocholine + H2O = sn-glycerol 3-phosphocholine + a fatty acid + H(+). Inhibited by organophosphorus esters. Functionally, intracellular phospholipase B that catalyzes the double deacylation of phosphatidylcholine (PC) to glycerophosphocholine (GroPCho). Plays an important role in membrane lipid homeostasis. Responsible for the rapid PC turnover in response to inositol, elevated temperatures, or when choline is present in the growth medium. The chain is Lysophospholipase NTE1 (NTE1) from Yarrowia lipolytica (strain CLIB 122 / E 150) (Yeast).